The following is a 206-amino-acid chain: Large ribosomal subunit protein uL4 (206 aa).

Positions Asn-47–Asp-94 are disordered. Over residues Ala-49–Lys-58 the composition is skewed to basic and acidic residues. Positions Ser-59–Ala-74 are enriched in basic residues.

Belongs to the universal ribosomal protein uL4 family. Part of the 50S ribosomal subunit.

Its function is as follows. One of the primary rRNA binding proteins, this protein initially binds near the 5'-end of the 23S rRNA. It is important during the early stages of 50S assembly. It makes multiple contacts with different domains of the 23S rRNA in the assembled 50S subunit and ribosome. Forms part of the polypeptide exit tunnel. This is Large ribosomal subunit protein uL4 from Laribacter hongkongensis (strain HLHK9).